The chain runs to 279 residues: Large ribosomal subunit protein uL2 (279 aa).

Disordered regions lie at residues 1-59 (MGIR…GGHK) and 224-279 (VAMN…KNKR). Basic residues predominate over residues 50–59 (TTRHKGGGHK). Residues 253–268 (REGRTRRPNKESDKLI) show a composition bias toward basic and acidic residues. The segment covering 269-279 (VRRRRTGKNKR) has biased composition (basic residues).

Belongs to the universal ribosomal protein uL2 family. In terms of assembly, part of the 50S ribosomal subunit. Forms a bridge to the 30S subunit in the 70S ribosome.

One of the primary rRNA binding proteins. Required for association of the 30S and 50S subunits to form the 70S ribosome, for tRNA binding and peptide bond formation. It has been suggested to have peptidyltransferase activity; this is somewhat controversial. Makes several contacts with the 16S rRNA in the 70S ribosome. The protein is Large ribosomal subunit protein uL2 of Pseudarthrobacter chlorophenolicus (strain ATCC 700700 / DSM 12829 / CIP 107037 / JCM 12360 / KCTC 9906 / NCIMB 13794 / A6) (Arthrobacter chlorophenolicus).